A 75-amino-acid polypeptide reads, in one-letter code: uncharacterized protein (75 aa).

4Fe-4S ferredoxin-type domains lie at 2-30 (SHTIVTEKCIGVAECVNACPVSCIHKGEG) and 37-68 (DWYWIDFAACIDCSICIQVCPTKGAILDKEEP). [3Fe-4S] cluster-binding residues include Cys10 and Cys16. Cys20, Cys46, Cys49, and Cys52 together coordinate [4Fe-4S] cluster. [3Fe-4S] cluster is bound at residue Cys56.

The cofactor is [4Fe-4S] cluster. [3Fe-4S] cluster is required as a cofactor.

The protein resides in the plastid. Its subcellular location is the chloroplast. This is an uncharacterized protein from Porphyra purpurea (Red seaweed).